A 640-amino-acid chain; its full sequence is Probable potassium transport system protein Kup 1 (640 aa).

The next 12 membrane-spanning stretches (helical) occupy residues 24-44 (LGALSLAAIGVVYGDIGTSPL), 67-87 (IASLVFWAIILVVTIKYVLFV), 116-136 (VGPLVGLGLFGAALFIGDGMI), 154-174 (PFFAPYVVPLTLIVLVALFTI), 186-206 (FGPVMVVWFLTIAALGLTEVV), 222-242 (TFLFTHGWIAFVVMGSVVLAV), 264-284 (WFALVLPALTLNYFGQAALIL), 296-316 (MLVPGWGLYPMVILATLATVI), 354-374 (IYIPRANWGLLLGIVALVVGF), 382-402 (AAYGIAVTGTMAATTILALVV), 411-431 (LWLCLGLGAVFLAVDLGFLGA), and 436-456 (VTQGGWFPLAVGLGMLLLMAT).

Belongs to the HAK/KUP transporter (TC 2.A.72) family.

Its subcellular location is the cell inner membrane. The enzyme catalyses K(+)(in) + H(+)(in) = K(+)(out) + H(+)(out). Its function is as follows. Transport of potassium into the cell. Likely operates as a K(+):H(+) symporter. The protein is Probable potassium transport system protein Kup 1 of Paramagnetospirillum magneticum (strain ATCC 700264 / AMB-1) (Magnetospirillum magneticum).